A 345-amino-acid chain; its full sequence is UDP-N-acetylenolpyruvoylglucosamine reductase (345 aa).

The FAD-binding PCMH-type domain occupies 27–197 (FDASAELAYE…TKVVFKLPKQ (171 aa)). Arg174 is an active-site residue. Ser245 serves as the catalytic Proton donor. Glu341 is an active-site residue.

Belongs to the MurB family. It depends on FAD as a cofactor.

It localises to the cytoplasm. The catalysed reaction is UDP-N-acetyl-alpha-D-muramate + NADP(+) = UDP-N-acetyl-3-O-(1-carboxyvinyl)-alpha-D-glucosamine + NADPH + H(+). Its pathway is cell wall biogenesis; peptidoglycan biosynthesis. Functionally, cell wall formation. The sequence is that of UDP-N-acetylenolpyruvoylglucosamine reductase from Polynucleobacter asymbioticus (strain DSM 18221 / CIP 109841 / QLW-P1DMWA-1) (Polynucleobacter necessarius subsp. asymbioticus).